The primary structure comprises 331 residues: Homoserine kinase (331 aa).

Belongs to the pseudomonas-type ThrB family.

It catalyses the reaction L-homoserine + ATP = O-phospho-L-homoserine + ADP + H(+). It functions in the pathway amino-acid biosynthesis; L-threonine biosynthesis; L-threonine from L-aspartate: step 4/5. The protein is Homoserine kinase of Burkholderia thailandensis (strain ATCC 700388 / DSM 13276 / CCUG 48851 / CIP 106301 / E264).